The primary structure comprises 258 residues: L-2,3-butanediol dehydrogenase (258 aa).

NAD(+) is bound by residues 12–14 (QGI), D33, Q37, 61–62 (DV), N88, Y154, K158, and 184–189 (PGIVGT). Catalysis depends on Y154, which acts as the Proton acceptor.

Belongs to the short-chain dehydrogenases/reductases (SDR) family. As to quaternary structure, homotetramer.

It carries out the reaction (S,S)-butane-2,3-diol + NAD(+) = (S)-acetoin + NADH + H(+). The catalysed reaction is (S)-acetoin + NAD(+) = diacetyl + NADH + H(+). With respect to regulation, slightly activated by Ba(2+), Ca(2+), Mn(2+), Mg(2+), and Co(2+), while Hg(2+) and Cu(2+) cause marked inhibition of the activity. Ni(2+), Zn(2+) and Cd(2+) have no effect on the catalytic activity. Is also slightly inhibited by lactate, pyruvate, succinate, acetate and formate. Catalyzes the reversible reduction of (S)-acetoin to (S,S)-butane-2,3-diol (L-BD) in the presence of NADH. To a lesser extent, can also catalyze the irreversible reduction of diacetyl to (S)-acetoin. Cannot oxidize meso-BD, D-BD, 2-butanol, 1,2-propanediol, ethanol, acetol, 1,2-butanediol, 1,3-butanediol, n-butanol, and n-propanol. Cannot reduce (R)-acetoin, acetol, dihydroxyacetone and 2,4-pentanedione. This Corynebacterium glutamicum (Brevibacterium saccharolyticum) protein is L-2,3-butanediol dehydrogenase.